The primary structure comprises 320 residues: Cytochrome f (320 aa).

An N-terminal signal peptide occupies residues 1-35 (MQTRNTFSWIKEEITRSISVSLMIYIITGASISNA). Heme-binding residues include Y36, C56, C59, and H60. Residues 286 to 306 (VQGLLFFLASIVFAQIFLVLK) traverse the membrane as a helical segment.

It belongs to the cytochrome f family. In terms of assembly, the 4 large subunits of the cytochrome b6-f complex are cytochrome b6, subunit IV (17 kDa polypeptide, petD), cytochrome f and the Rieske protein, while the 4 small subunits are PetG, PetL, PetM and PetN. The complex functions as a dimer. Heme is required as a cofactor.

The protein localises to the plastid. It is found in the chloroplast thylakoid membrane. In terms of biological role, component of the cytochrome b6-f complex, which mediates electron transfer between photosystem II (PSII) and photosystem I (PSI), cyclic electron flow around PSI, and state transitions. This is Cytochrome f from Gossypium hirsutum (Upland cotton).